The sequence spans 401 residues: Lipid-A-disaccharide synthase (401 aa).

It belongs to the LpxB family.

It catalyses the reaction a lipid X + a UDP-2-N,3-O-bis[(3R)-3-hydroxyacyl]-alpha-D-glucosamine = a lipid A disaccharide + UDP + H(+). It participates in bacterial outer membrane biogenesis; LPS lipid A biosynthesis. Condensation of UDP-2,3-diacylglucosamine and 2,3-diacylglucosamine-1-phosphate to form lipid A disaccharide, a precursor of lipid A, a phosphorylated glycolipid that anchors the lipopolysaccharide to the outer membrane of the cell. This Ruegeria pomeroyi (strain ATCC 700808 / DSM 15171 / DSS-3) (Silicibacter pomeroyi) protein is Lipid-A-disaccharide synthase.